A 338-amino-acid polypeptide reads, in one-letter code: Anthranilate phosphoribosyltransferase (338 aa).

Residues Gly78, 81–82 (GD), Ser86, 88–91 (NIST), 106–114 (KHGNKSVTS), and Ser118 each bind 5-phospho-alpha-D-ribose 1-diphosphate. Position 78 (Gly78) interacts with anthranilate. Residue Ser90 coordinates Mg(2+). Asn109 is a binding site for anthranilate. Arg163 is a binding site for anthranilate. Residues Asp222 and Glu223 each coordinate Mg(2+).

It belongs to the anthranilate phosphoribosyltransferase family. As to quaternary structure, homodimer. The cofactor is Mg(2+).

It catalyses the reaction N-(5-phospho-beta-D-ribosyl)anthranilate + diphosphate = 5-phospho-alpha-D-ribose 1-diphosphate + anthranilate. It participates in amino-acid biosynthesis; L-tryptophan biosynthesis; L-tryptophan from chorismate: step 2/5. In terms of biological role, catalyzes the transfer of the phosphoribosyl group of 5-phosphorylribose-1-pyrophosphate (PRPP) to anthranilate to yield N-(5'-phosphoribosyl)-anthranilate (PRA). The polypeptide is Anthranilate phosphoribosyltransferase (Staphylococcus saprophyticus subsp. saprophyticus (strain ATCC 15305 / DSM 20229 / NCIMB 8711 / NCTC 7292 / S-41)).